The primary structure comprises 343 residues: Anthranilate phosphoribosyltransferase (343 aa).

5-phospho-alpha-D-ribose 1-diphosphate is bound by residues Gly79, 82 to 83, Thr87, 89 to 92, 106 to 114, and Ser118; these read GD, NVST, and KHGNRAASS. Position 79 (Gly79) interacts with anthranilate. Mg(2+) is bound at residue Ser91. Anthranilate is bound at residue Asn109. Residue Arg164 participates in anthranilate binding. Mg(2+) contacts are provided by Asp223 and Glu224.

It belongs to the anthranilate phosphoribosyltransferase family. In terms of assembly, homodimer. Mg(2+) serves as cofactor.

The enzyme catalyses N-(5-phospho-beta-D-ribosyl)anthranilate + diphosphate = 5-phospho-alpha-D-ribose 1-diphosphate + anthranilate. The protein operates within amino-acid biosynthesis; L-tryptophan biosynthesis; L-tryptophan from chorismate: step 2/5. In terms of biological role, catalyzes the transfer of the phosphoribosyl group of 5-phosphorylribose-1-pyrophosphate (PRPP) to anthranilate to yield N-(5'-phosphoribosyl)-anthranilate (PRA). The sequence is that of Anthranilate phosphoribosyltransferase from Metallosphaera sedula (strain ATCC 51363 / DSM 5348 / JCM 9185 / NBRC 15509 / TH2).